A 325-amino-acid polypeptide reads, in one-letter code: Beta-ketoacyl-[acyl-carrier-protein] synthase III (325 aa).

Residues Cys-112 and His-250 contribute to the active site. The ACP-binding stretch occupies residues 251 to 255 (QANSR). The active site involves Asn-280.

The protein belongs to the thiolase-like superfamily. FabH family. In terms of assembly, homodimer.

It is found in the cytoplasm. It carries out the reaction malonyl-[ACP] + acetyl-CoA + H(+) = 3-oxobutanoyl-[ACP] + CO2 + CoA. It participates in lipid metabolism; fatty acid biosynthesis. Its function is as follows. Catalyzes the condensation reaction of fatty acid synthesis by the addition to an acyl acceptor of two carbons from malonyl-ACP. Catalyzes the first condensation reaction which initiates fatty acid synthesis and may therefore play a role in governing the total rate of fatty acid production. Possesses both acetoacetyl-ACP synthase and acetyl transacylase activities. Its substrate specificity determines the biosynthesis of branched-chain and/or straight-chain of fatty acids. The sequence is that of Beta-ketoacyl-[acyl-carrier-protein] synthase III from Lactococcus lactis subsp. lactis (strain IL1403) (Streptococcus lactis).